The sequence spans 294 residues: MKTKIIVIVGPTAVGKTALAIEVAKRFNGEVVSGDSQQVYRGLDIGTAKASPEEQAAVLHHLIDVREITESYSAFDFVSEAKMTIEDIHSRGKLAIIAGGTGLYIQSLLEGYHLGGETPHEEILAYRASLEPYSDEELAHLVEQAGLEIPQFNRRRAMRALEIAHFGQDLENQETLYEPLIICLDDERSQLYERINHRVDLMFEAGLLDEAKWLFDHSPNVQAAKGIGYKELFPYFRGEQTFEEASESLKQATRRFAKRQLTWFRNRMQVTFYQIGESGVQDRILSQIEEFLDD.

10–17 is a binding site for ATP; that stretch reads GPTAVGKT. Position 12 to 17 (12 to 17) interacts with substrate; the sequence is TAVGKT. An interaction with substrate tRNA region spans residues 35–38; the sequence is DSQQ.

Belongs to the IPP transferase family. Monomer. It depends on Mg(2+) as a cofactor.

It carries out the reaction adenosine(37) in tRNA + dimethylallyl diphosphate = N(6)-dimethylallyladenosine(37) in tRNA + diphosphate. Functionally, catalyzes the transfer of a dimethylallyl group onto the adenine at position 37 in tRNAs that read codons beginning with uridine, leading to the formation of N6-(dimethylallyl)adenosine (i(6)A). This is tRNA dimethylallyltransferase from Streptococcus pneumoniae (strain Taiwan19F-14).